A 149-amino-acid polypeptide reads, in one-letter code: Large ribosomal subunit protein eL24A (149 aa).

Composition is skewed to basic and acidic residues over residues 93 to 102 (KRNQRPEVRA) and 116 to 125 (KAASESEKKA). Residues 93-149 (KRNQRPEVRAAARAAALKQRKDKKAASESEKKAIKAKSAASSARGQAIKNAKAAARH) form a disordered region.

The protein belongs to the eukaryotic ribosomal protein eL24 family. In terms of assembly, component of the large ribosomal subunit (LSU). Mature yeast ribosomes consist of a small (40S) and a large (60S) subunit. The 40S small subunit contains 1 molecule of ribosomal RNA (18S rRNA) and at least 33 different proteins. The large 60S subunit contains 3 rRNA molecules (25S, 5.8S and 5S rRNA) and at least 46 different proteins.

The protein localises to the cytoplasm. In terms of biological role, component of the ribosome, a large ribonucleoprotein complex responsible for the synthesis of proteins in the cell. The small ribosomal subunit (SSU) binds messenger RNAs (mRNAs) and translates the encoded message by selecting cognate aminoacyl-transfer RNA (tRNA) molecules. The large subunit (LSU) contains the ribosomal catalytic site termed the peptidyl transferase center (PTC), which catalyzes the formation of peptide bonds, thereby polymerizing the amino acids delivered by tRNAs into a polypeptide chain. The nascent polypeptides leave the ribosome through a tunnel in the LSU and interact with protein factors that function in enzymatic processing, targeting, and the membrane insertion of nascent chains at the exit of the ribosomal tunnel. The sequence is that of Large ribosomal subunit protein eL24A (rpl2401) from Schizosaccharomyces pombe (strain 972 / ATCC 24843) (Fission yeast).